Reading from the N-terminus, the 446-residue chain is Tubulin beta-2 chain (446 aa).

GTP is bound by residues Gln11, Glu69, Ser138, Gly142, Thr143, Gly144, Asn204, and Asn226. Glu69 is a Mg(2+) binding site. Positions 424-446 (QYQEATADEEGEFDEDEEGGGDE) are disordered. A compositionally biased stretch (acidic residues) spans 429-446 (TADEEGEFDEDEEGGGDE).

Belongs to the tubulin family. Dimer of alpha and beta chains. A typical microtubule is a hollow water-filled tube with an outer diameter of 25 nm and an inner diameter of 15 nM. Alpha-beta heterodimers associate head-to-tail to form protofilaments running lengthwise along the microtubule wall with the beta-tubulin subunit facing the microtubule plus end conferring a structural polarity. Microtubules usually have 13 protofilaments but different protofilament numbers can be found in some organisms and specialized cells. It depends on Mg(2+) as a cofactor. Testis specific.

The protein localises to the cytoplasm. The protein resides in the cytoskeleton. In terms of biological role, tubulin is the major constituent of microtubules, a cylinder consisting of laterally associated linear protofilaments composed of alpha- and beta-tubulin heterodimers. Microtubules grow by the addition of GTP-tubulin dimers to the microtubule end, where a stabilizing cap forms. Below the cap, tubulin dimers are in GDP-bound state, owing to GTPase activity of alpha-tubulin. This chain is Tubulin beta-2 chain (betaTub85D), found in Drosophila melanogaster (Fruit fly).